A 305-amino-acid chain; its full sequence is E3 ubiquitin-protein ligase RNF115 (305 aa).

A2 carries the post-translational modification N-acetylalanine. Residues 100 to 110 are compositionally biased toward basic and acidic residues; sequence NRANERGHQTH. The segment at 100 to 139 is disordered; that stretch reads NRANERGHQTHTDFWGPSRPPRLPMTRRYRSRGSTRPDRS. Phosphoserine is present on S133. Residues 229–270 form an RING-type zinc finger; the sequence is CPVCKEDYTVEEKVRQLPCNHFFHSSCIVPWLELHDTCPVCR. A disordered region spans residues 274–305; the sequence is NGEDSTRQTQSSEASASNRFSNDSQLHDRWTF. The segment covering 280–297 has biased composition (polar residues); that stretch reads RQTQSSEASASNRFSNDS.

As to quaternary structure, interacts with RAB7A. Interacts with EGFR and FLT3. Interacts with BST2. Interacts with STX17. Interacts with YWHAE. In terms of processing, phosphorylated by AKT1, allowing association with the 14-3-3 chaperones that facilitates associating with TLRs. Deubiquitinated by USP9X; antogonizing its autoubiquitination and subsequent proteasomal degradation. Post-translationally, RING-type zinc finger-dependent and E2-dependent autoubiquitination.

It is found in the cytoplasm. It localises to the cytoplasmic vesicle. The protein resides in the phagosome. Its subcellular location is the nucleus. The protein localises to the endoplasmic reticulum. It is found in the golgi apparatus. It catalyses the reaction S-ubiquitinyl-[E2 ubiquitin-conjugating enzyme]-L-cysteine + [acceptor protein]-L-lysine = [E2 ubiquitin-conjugating enzyme]-L-cysteine + N(6)-ubiquitinyl-[acceptor protein]-L-lysine.. It participates in protein modification; protein ubiquitination. Its function is as follows. E3 ubiquitin-protein ligase that catalyzes the 'Lys-48'- and/or 'Lys-63'-linked polyubiquitination of various substrates and thereby plays a role in a number of signaling pathways including autophagy, innate immunity, cell proliferation and cell death. Plays a role in the endosomal trafficking and degradation of membrane receptors including EGFR, FLT3, MET and CXCR4 through their polyubiquitination. Participates together with BST2 in antiviral immunity by facilitating the internalization of HIV-1 virions into intracellular vesicles leading to their lysosomal degradation. Also possesses an antiviral activity independently of BST2 by promoting retroviral GAG proteins ubiquitination, redistribution to endo-lysosomal compartments and, ultimately, lysosomal degradation. Catalyzes distinct types of ubiquitination on MAVS and STING1 at different phases of viral infection to promote innate antiviral response. Mediates the 'Lys-48'-linked ubiquitination of MAVS leading to its proteasomal degradation and ubiquitinates STING1 via 'Lys-63'-linked polyubiquitination, critical for its oligomerization and the subsequent recruitment of TBK1. Plays a positive role in the autophagosome-lysosome fusion by interacting with STX17 and enhancing its stability without affecting 'Lys-48'- or 'Lys-63'-linked polyubiquitination levels, which in turn promotes autophagosome maturation. Negatively regulates TLR-induced expression of proinflammatory cytokines by catalyzing 'Lys-11'-linked ubiquitination of RAB1A and RAB13 to inhibit post-ER trafficking of TLRs to the Golgi by RAB1A and subsequently from the Golgi apparatus to the cell surface by RAB13. This Mus musculus (Mouse) protein is E3 ubiquitin-protein ligase RNF115.